The chain runs to 120 residues: MFCVCLTLKIVYFDLIRPMCSLRRLYRRLRLVARLRREYRLRGLARYSGMMGSGFLWAGTKPLQAPYILLPAPVLRTPHPTRKLQTPLNEPPRTWRKTATTHTRGGSSLLITLPLKITVP.

Residues 80 to 99 form a disordered region; the sequence is PTRKLQTPLNEPPRTWRKTA.

This is an uncharacterized protein from Goose circovirus (GoCV).